We begin with the raw amino-acid sequence, 587 residues long: Trans-activating transcriptional regulatory protein (587 aa).

Belongs to the nucleopolyhedrovirus IE-1 protein family.

Functionally, regulatory transcriptional protein, which trans-activates gene expression from early baculovirus promoters. Can also trans-activate its own promoter, suggesting that it is autoregulated during normal infection of insect cells. This chain is Trans-activating transcriptional regulatory protein (IE1), found in Bombyx mori nuclear polyhedrosis virus (BmNPV).